Consider the following 306-residue polypeptide: GTPase IMAP family member 1 (306 aa).

Residues 1–21 (MGGRKMATDEENVYGLEENAQ) are disordered. At 1–272 (MGGRKMATDE…RLWKWLKSPR (272 aa)) the chain is on the cytoplasmic side. The region spanning 25-229 (ESTRRLILVG…YSNEVYELAQ (205 aa)) is the AIG1-type G domain. Residues 34–41 (GRTGAGKS) form a G1 region. GTP-binding positions include 34-42 (GRTGAGKSA) and S55. The interval 61 to 65 (SVTRA) is G2. The interval 82–85 (DTPD) is G3. Residues 152–155 (TRKE) form a G4 region. GTP contacts are provided by residues 153–155 (RKE) and N190. The G5 stretch occupies residues 189-191 (DNR). The chain crosses the membrane as a helical; Anchor for type IV membrane protein span at residues 273 to 292 (SWRLGLALLLGGALLFWVLL). Topologically, residues 293–306 (HRRWSEAVAEVGPD) are lumenal.

This sequence belongs to the TRAFAC class TrmE-Era-EngA-EngB-Septin-like GTPase superfamily. AIG1/Toc34/Toc159-like paraseptin GTPase family. IAN subfamily. Predominantly expressed in the spleen and to a lesser extent in the lymph nodes. Detected in T-cells.

It is found in the endoplasmic reticulum membrane. It localises to the golgi apparatus membrane. In terms of biological role, may regulate lymphocyte survival. Required for normal levels of mature T-lymphocytes and mature B-cells. The sequence is that of GTPase IMAP family member 1 (GIMAP1) from Homo sapiens (Human).